The following is a 955-amino-acid chain: UvrABC system protein A (955 aa).

35 to 42 is an ATP binding site; the sequence is GLSGSGKS. 2 consecutive ABC transporter domains span residues 322–601 and 621–951; these read WGST…EESI and GHDN…RYLK. Residue 654–661 coordinates ATP; that stretch reads GVSGSGKS. The C4-type zinc-finger motif lies at 754–780; that stretch reads CEACQGDGLIKIEMHFLPDVYVKCDIC.

The protein belongs to the ABC transporter superfamily. UvrA family. As to quaternary structure, forms a heterotetramer with UvrB during the search for lesions.

It is found in the cytoplasm. Functionally, the UvrABC repair system catalyzes the recognition and processing of DNA lesions. UvrA is an ATPase and a DNA-binding protein. A damage recognition complex composed of 2 UvrA and 2 UvrB subunits scans DNA for abnormalities. When the presence of a lesion has been verified by UvrB, the UvrA molecules dissociate. The polypeptide is UvrABC system protein A (Rickettsia felis (strain ATCC VR-1525 / URRWXCal2) (Rickettsia azadi)).